A 70-amino-acid polypeptide reads, in one-letter code: MQELQQKIEDLETKLAFQELSVEELNQEVIKLNQLVAKQQQQISLMVNKLMDIEPSNMASESEETPPPHY.

Belongs to the SlyX family.

The chain is Protein SlyX homolog from Shewanella denitrificans (strain OS217 / ATCC BAA-1090 / DSM 15013).